The following is a 384-amino-acid chain: Sensor-like histidine kinase SenX3 (384 aa).

One can recognise a Histidine kinase domain in the interval 153–369 (NVSHELKTPV…TFTLSIPEYP (217 aa)). Residue histidine 156 is modified to Phosphohistidine; by autocatalysis. The segment at 360–384 (TFTLSIPEYPDPESHSDEREDQRER) is disordered. Basic and acidic residues predominate over residues 371–384 (PESHSDEREDQRER).

In terms of processing, autophosphorylated.

Its subcellular location is the cell membrane. It catalyses the reaction ATP + protein L-histidine = ADP + protein N-phospho-L-histidine.. Its function is as follows. Member of the two-component regulatory system SenX3/RegX3 involved in stress response. The system is involved in phosphate starvation response. Probably exhibits a dual role as a phosphatase or a phosphodonor for the response regulator RegX3, depending upon phosphate availability. When environmental phosphate is abundant, SenX3 is required to maintain RegX3 in an unphosphorylated state, where it is unable to bind target DNA. Under conditions of phosphate limitation, SenX3 autophosphorylates and then transfers the phosphate group to RegX3. Probably does not itself sense phosphate concentrations, which may be relayed to SenX3 by the PstSCAB phosphate transporter system. This chain is Sensor-like histidine kinase SenX3, found in Mycolicibacterium smegmatis (strain ATCC 700084 / mc(2)155) (Mycobacterium smegmatis).